Here is a 2752-residue protein sequence, read N- to C-terminus: Protein PFF0380w (2752 aa).

Residues 20-30 (EREKEEEEKKR) show a composition bias toward basic and acidic residues. 5 disordered regions span residues 20 to 44 (EREKEEEEKKRNYNISNNNNNNNYN), 139 to 160 (HIHKNNDINNIHEKNDKSNNDY), 634 to 678 (NDIV…INMK), 1048 to 1130 (DKKS…SGEN), and 1153 to 1172 (ENLQSDENHNNILYPYNNNG). A compositionally biased stretch (low complexity) spans 32–44 (YNISNNNNNNNYN). The span at 142-157 (KNNDINNIHEKNDKSN) shows a compositional bias: basic and acidic residues. Residues 640–674 (NNNNNNNNNNNNNNNNNNNNNNNNNNNNNNNNNNN) are compositionally biased toward low complexity. The segment covering 1048–1060 (DKKSEDMKEDTPT) has biased composition (basic and acidic residues). Polar residues predominate over residues 1061–1075 (RGENLQRGQNLQRGD). The span at 1076–1090 (NLQRGDNLQRGDNLQ) shows a compositional bias: basic and acidic residues. Residues 1091–1130 (RGDNLQNGDNLQNGDNLQRGDNLQNGENLQSGENLQSGEN) are compositionally biased toward polar residues. Positions 1162-1172 (NNILYPYNNNG) are enriched in low complexity. An HTH OST-type domain is found at 1277-1354 (TLEEVLEIIS…LHRTHIQHKK (78 aa)). Disordered regions lie at residues 1457–1499 (DIKQ…NNIS), 1958–1999 (AKNS…YYML), 2063–2099 (KRKNNNIHNYNDNNNDNNNDNNNDNNNDNNNDNNNDK), and 2501–2537 (DENNILNNNNDNNNNNNDKSNLVLHNNNDKSNHFLHN). 2 stretches are compositionally biased toward low complexity: residues 1469-1499 (NNINSNNSNNSNSNSNSNNNNNNNYNSNNIS) and 1962-1975 (NQENINQNEINYNN). Acidic residues predominate over residues 1976–1994 (NDDDDDNNNNNNDDDDDDN). Low complexity-rich tracts occupy residues 2068–2095 (NIHNYNDNNNDNNNDNNNDNNNDNNNDN) and 2501–2526 (DENNILNNNNDNNNNNNDKSNLVLHN).

The sequence is that of Protein PFF0380w from Plasmodium falciparum (isolate 3D7).